A 107-amino-acid chain; its full sequence is U1-lycotoxin-Ls1e (107 aa).

The signal sequence occupies residues 1 to 20 (MMKVLVVFALLVTLISYSSS). Positions 21–41 (EGIDDLEADELLSLMANEQTR) are excised as a propeptide. 4 disulfides stabilise this stretch: cysteine 44–cysteine 59, cysteine 51–cysteine 68, cysteine 58–cysteine 86, and cysteine 70–cysteine 84.

Belongs to the neurotoxin 19 (CSTX) family. 04 (U1-Lctx) subfamily. Expressed by the venom gland.

Its subcellular location is the secreted. The protein is U1-lycotoxin-Ls1e of Lycosa singoriensis (Wolf spider).